Here is a 325-residue protein sequence, read N- to C-terminus: uncharacterized protein (325 aa).

The segment at 1–32 (MKQEYIPLDEFPNKSNEGMLNDEGTSSSGLST) is disordered. The segment covering 23–32 (EGTSSSGLST) has biased composition (low complexity). Positions 135-223 (AEEISNLKTS…LKKREDLLRL (89 aa)) form a coiled coil.

Its subcellular location is the cytoplasm. The protein localises to the cytoskeleton. It is found in the microtubule organizing center. The protein resides in the spindle pole body. This is an uncharacterized protein from Schizosaccharomyces pombe (strain 972 / ATCC 24843) (Fission yeast).